The primary structure comprises 450 residues: Asparagine--tRNA ligase (450 aa).

This sequence belongs to the class-II aminoacyl-tRNA synthetase family. In terms of assembly, homodimer.

The protein resides in the cytoplasm. The catalysed reaction is tRNA(Asn) + L-asparagine + ATP = L-asparaginyl-tRNA(Asn) + AMP + diphosphate + H(+). This Metamycoplasma arthritidis (strain 158L3-1) (Mycoplasma arthritidis) protein is Asparagine--tRNA ligase.